The primary structure comprises 286 residues: 33 kDa chaperonin (286 aa).

2 disulfides stabilise this stretch: C233-C235 and C267-C270.

Belongs to the HSP33 family. In terms of processing, under oxidizing conditions two disulfide bonds are formed involving the reactive cysteines. Under reducing conditions zinc is bound to the reactive cysteines and the protein is inactive.

It is found in the cytoplasm. Redox regulated molecular chaperone. Protects both thermally unfolding and oxidatively damaged proteins from irreversible aggregation. Plays an important role in the bacterial defense system toward oxidative stress. This is 33 kDa chaperonin from Histophilus somni (strain 129Pt) (Haemophilus somnus).